A 487-amino-acid chain; its full sequence is CUGBP Elav-like family member 1 (487 aa).

Met-1 is modified (N-acetylmethionine). Thr-4 is modified (phosphothreonine). 2 consecutive RRM domains span residues 16–99 (IKMF…PADS) and 108–188 (RKLF…FADT). Lys-109 participates in a covalent cross-link: Glycyl lysine isopeptide (Lys-Gly) (interchain with G-Cter in SUMO2). Ser-179 and Ser-303 each carry phosphoserine. The tract at residues 277-310 (TPSGTNALTTSSSPLSVLTSSAGSSPSSSSSNSV) is disordered. The segment covering 283-310 (ALTTSSSPLSVLTSSAGSSPSSSSSNSV) has biased composition (low complexity). The RRM 3 domain maps to 402 to 480 (ANLFIYHLPQ…KRLKVQLKRS (79 aa)).

It belongs to the CELF/BRUNOL family. Interacts with HNRNPH1; the interaction in RNA-dependent. Interacts with PARN. Component of an EIF2 complex at least composed of CELF1/CUGBP1, CALR, CALR3, EIF2S1, EIF2S2, HSP90B1 and HSPA5. Associates with polysomes.

It is found in the nucleus. The protein localises to the cytoplasm. In terms of biological role, RNA-binding protein implicated in the regulation of several post-transcriptional events. Involved in pre-mRNA alternative splicing, mRNA translation and stability. Mediates exon inclusion and/or exclusion in pre-mRNA that are subject to tissue-specific and developmentally regulated alternative splicing. Specifically activates exon 5 inclusion of cardiac isoforms of TNNT2 during heart remodeling at the juvenile to adult transition. Acts both as an activator and as a repressor of a pair of coregulated exons: promotes inclusion of the smooth muscle (SM) exon but exclusion of the non-muscle (NM) exon in actinin pre-mRNAs. Activates SM exon 5 inclusion by antagonizing the repressive effect of PTB. Promotes exclusion of exon 11 of the INSR pre-mRNA. Inhibits, together with HNRNPH1, insulin receptor (IR) pre-mRNA exon 11 inclusion in myoblast. Increases translation and controls the choice of translation initiation codon of CEBPB mRNA. Increases mRNA translation of CEBPB in aging liver. Increases translation of CDKN1A mRNA by antagonizing the repressive effect of CALR3. Mediates rapid cytoplasmic mRNA deadenylation. Recruits the deadenylase PARN to the poly(A) tail of EDEN-containing mRNAs to promote their deadenylation. Required for completion of spermatogenesis. Binds to (CUG)n triplet repeats in the 3'-UTR of transcripts such as DMPK and to Bruno response elements (BREs). Binds to muscle-specific splicing enhancer (MSE) intronic sites flanking the alternative exon 5 of TNNT2 pre-mRNA. Binds to AU-rich sequences (AREs or EDEN-like) localized in the 3'-UTR of JUN and FOS mRNAs. Binds to the IR RNA. Binds to the 5'-region of CDKN1A and CEBPB mRNAs. Binds with the 5'-region of CEBPB mRNA in aging liver. May be a specific regulator of miRNA biogenesis. Binds to primary microRNA pri-MIR140 and, with CELF2, negatively regulates the processing to mature miRNA. In Rattus norvegicus (Rat), this protein is CUGBP Elav-like family member 1 (Celf1).